Reading from the N-terminus, the 229-residue chain is Potassium/proton antiporter CemA (229 aa).

3 consecutive transmembrane segments (helical) span residues 6–26 (AFIP…ISLC), 107–127 (ILHF…SFWG), and 189–209 (ILSG…KYWI).

Belongs to the CemA family.

The protein resides in the plastid. The protein localises to the chloroplast inner membrane. It carries out the reaction K(+)(in) + H(+)(out) = K(+)(out) + H(+)(in). Functionally, contributes to K(+)/H(+) antiport activity by supporting proton efflux to control proton extrusion and homeostasis in chloroplasts in a light-dependent manner to modulate photosynthesis. Prevents excessive induction of non-photochemical quenching (NPQ) under continuous-light conditions. Indirectly promotes efficient inorganic carbon uptake into chloroplasts. In Nasturtium officinale (Watercress), this protein is Potassium/proton antiporter CemA.